The chain runs to 263 residues: uncharacterized protein (263 aa).

31–38 contributes to the ATP binding site; the sequence is GPTGSGKT.

Belongs to the CbbQ/NirQ/NorQ/GpvN family.

This is an uncharacterized protein from Staphylococcus epidermidis (strain ATCC 35984 / DSM 28319 / BCRC 17069 / CCUG 31568 / BM 3577 / RP62A).